Consider the following 310-residue polypeptide: Tagatose-6-phosphate kinase (310 aa).

Belongs to the carbohydrate kinase PfkB family. LacC subfamily.

The enzyme catalyses D-tagatofuranose 6-phosphate + ATP = D-tagatofuranose 1,6-bisphosphate + ADP + H(+). It functions in the pathway carbohydrate metabolism; D-tagatose 6-phosphate degradation; D-glyceraldehyde 3-phosphate and glycerone phosphate from D-tagatose 6-phosphate: step 1/2. The protein is Tagatose-6-phosphate kinase of Streptococcus agalactiae serotype V (strain ATCC BAA-611 / 2603 V/R).